The primary structure comprises 235 residues: Probable transcriptional regulatory protein Cla_1081 (235 aa).

Belongs to the TACO1 family.

Its subcellular location is the cytoplasm. This is Probable transcriptional regulatory protein Cla_1081 from Campylobacter lari (strain RM2100 / D67 / ATCC BAA-1060).